The following is a 27-amino-acid chain: LQCYSCINQVDCTSVINCTXNQDACLY.

2 disulfides stabilise this stretch: Cys3/Cys25 and Cys6/Cys12. Asn17 carries an N-linked (GlcNAc...) asparagine glycan.

In terms of assembly, interacts with T-cell surface antigen CD2. N- and O-glycosylated. As to expression, expressed in erythrocytes and lymphocytes. Not detected in platelets.

The protein resides in the cell membrane. Its subcellular location is the secreted. Functionally, potent inhibitor of the complement membrane attack complex (MAC) action, which protects self-cells from damage during complement activation. Acts by binding to the beta-haipins of C8 (C8A and C8B) components of the assembling MAC, forming an intermolecular beta-sheet that prevents incorporation of the multiple copies of C9 required for complete formation of the osmolytic pore. This is CD59 glycoprotein from Ovis aries (Sheep).